The chain runs to 511 residues: ATP synthase subunit alpha (511 aa).

Residue 170 to 177 coordinates ATP; the sequence is GDRQTGKT.

This sequence belongs to the ATPase alpha/beta chains family. As to quaternary structure, F-type ATPases have 2 components, CF(1) - the catalytic core - and CF(0) - the membrane proton channel. CF(1) has five subunits: alpha(3), beta(3), gamma(1), delta(1), epsilon(1). CF(0) has three main subunits: a(1), b(2) and c(9-12). The alpha and beta chains form an alternating ring which encloses part of the gamma chain. CF(1) is attached to CF(0) by a central stalk formed by the gamma and epsilon chains, while a peripheral stalk is formed by the delta and b chains.

The protein resides in the cell inner membrane. The catalysed reaction is ATP + H2O + 4 H(+)(in) = ADP + phosphate + 5 H(+)(out). In terms of biological role, produces ATP from ADP in the presence of a proton gradient across the membrane. The alpha chain is a regulatory subunit. This chain is ATP synthase subunit alpha, found in Granulibacter bethesdensis (strain ATCC BAA-1260 / CGDNIH1).